A 107-amino-acid polypeptide reads, in one-letter code: Phosphoribosyl-ATP pyrophosphatase (107 aa).

This sequence belongs to the PRA-PH family.

The protein resides in the cytoplasm. The enzyme catalyses 1-(5-phospho-beta-D-ribosyl)-ATP + H2O = 1-(5-phospho-beta-D-ribosyl)-5'-AMP + diphosphate + H(+). It functions in the pathway amino-acid biosynthesis; L-histidine biosynthesis; L-histidine from 5-phospho-alpha-D-ribose 1-diphosphate: step 2/9. The chain is Phosphoribosyl-ATP pyrophosphatase from Azoarcus sp. (strain BH72).